The chain runs to 568 residues: Dihydroxy-acid dehydratase 1 (568 aa).

The segment at 1-22 (MAEQTNTPDLKPRSRDVTDGLE) is disordered. Positions 10 to 22 (LKPRSRDVTDGLE) are enriched in basic and acidic residues. Cys57 is a binding site for [2Fe-2S] cluster. Asp89 serves as a coordination point for Mg(2+). Cys130 is a [2Fe-2S] cluster binding site. Residues Asp131 and Lys132 each contribute to the Mg(2+) site. N6-carboxylysine is present on Lys132. Residue Cys207 coordinates [2Fe-2S] cluster. Glu458 serves as a coordination point for Mg(2+). The active-site Proton acceptor is the Ser484.

This sequence belongs to the IlvD/Edd family. As to quaternary structure, homodimer. [2Fe-2S] cluster is required as a cofactor. Requires Mg(2+) as cofactor.

It carries out the reaction (2R)-2,3-dihydroxy-3-methylbutanoate = 3-methyl-2-oxobutanoate + H2O. The enzyme catalyses (2R,3R)-2,3-dihydroxy-3-methylpentanoate = (S)-3-methyl-2-oxopentanoate + H2O. It functions in the pathway amino-acid biosynthesis; L-isoleucine biosynthesis; L-isoleucine from 2-oxobutanoate: step 3/4. The protein operates within amino-acid biosynthesis; L-valine biosynthesis; L-valine from pyruvate: step 3/4. In terms of biological role, functions in the biosynthesis of branched-chain amino acids. Catalyzes the dehydration of (2R,3R)-2,3-dihydroxy-3-methylpentanoate (2,3-dihydroxy-3-methylvalerate) into 2-oxo-3-methylpentanoate (2-oxo-3-methylvalerate) and of (2R)-2,3-dihydroxy-3-methylbutanoate (2,3-dihydroxyisovalerate) into 2-oxo-3-methylbutanoate (2-oxoisovalerate), the penultimate precursor to L-isoleucine and L-valine, respectively. This chain is Dihydroxy-acid dehydratase 1, found in Nocardia farcinica (strain IFM 10152).